The chain runs to 433 residues: uncharacterized protein (433 aa).

A helical membrane pass occupies residues 36–58; that stretch reads YYYYVQLAFKMLVGVLKNLPVVY. The disordered stretch occupies residues 169–433; it reads VRVPSRDLQP…GEGRDLPEDN (265 aa). Composition is skewed to acidic residues over residues 216-227 and 234-254; these read GEPGENGDESDE and GDEDAAQSEQNNDDGMDYESD. 3 stretches are compositionally biased toward basic and acidic residues: residues 265–280, 354–364, and 422–433; these read EPDRRHDAEAGERGSE, GGRRPARRDSP, and RRGEGRDLPEDN.

The protein localises to the host membrane. This is an uncharacterized protein from Psittacid herpesvirus 1 (isolate Amazon parrot/-/97-0001/1997) (PsHV-1).